The sequence spans 206 residues: Thiamine-phosphate synthase (206 aa).

4-amino-2-methyl-5-(diphosphooxymethyl)pyrimidine is bound by residues Gln-38–Lys-42 and Asn-70. 2 residues coordinate Mg(2+): Asp-71 and Asp-90. Thr-109 serves as a coordination point for 4-amino-2-methyl-5-(diphosphooxymethyl)pyrimidine. Thr-135–Thr-137 contributes to the 2-[(2R,5Z)-2-carboxy-4-methylthiazol-5(2H)-ylidene]ethyl phosphate binding site. Lys-138 lines the 4-amino-2-methyl-5-(diphosphooxymethyl)pyrimidine pocket. 2-[(2R,5Z)-2-carboxy-4-methylthiazol-5(2H)-ylidene]ethyl phosphate contacts are provided by residues Gly-165 and Val-185–Ser-186.

This sequence belongs to the thiamine-phosphate synthase family. Mg(2+) serves as cofactor.

The enzyme catalyses 2-[(2R,5Z)-2-carboxy-4-methylthiazol-5(2H)-ylidene]ethyl phosphate + 4-amino-2-methyl-5-(diphosphooxymethyl)pyrimidine + 2 H(+) = thiamine phosphate + CO2 + diphosphate. It carries out the reaction 2-(2-carboxy-4-methylthiazol-5-yl)ethyl phosphate + 4-amino-2-methyl-5-(diphosphooxymethyl)pyrimidine + 2 H(+) = thiamine phosphate + CO2 + diphosphate. It catalyses the reaction 4-methyl-5-(2-phosphooxyethyl)-thiazole + 4-amino-2-methyl-5-(diphosphooxymethyl)pyrimidine + H(+) = thiamine phosphate + diphosphate. It participates in cofactor biosynthesis; thiamine diphosphate biosynthesis; thiamine phosphate from 4-amino-2-methyl-5-diphosphomethylpyrimidine and 4-methyl-5-(2-phosphoethyl)-thiazole: step 1/1. In terms of biological role, condenses 4-methyl-5-(beta-hydroxyethyl)thiazole monophosphate (THZ-P) and 2-methyl-4-amino-5-hydroxymethyl pyrimidine pyrophosphate (HMP-PP) to form thiamine monophosphate (TMP). The protein is Thiamine-phosphate synthase of Fusobacterium nucleatum subsp. nucleatum (strain ATCC 25586 / DSM 15643 / BCRC 10681 / CIP 101130 / JCM 8532 / KCTC 2640 / LMG 13131 / VPI 4355).